The primary structure comprises 831 residues: Elongator complex protein 2 (831 aa).

WD repeat units lie at residues 56–100 (GHTA…VLKS), 105–152 (GHEG…VKYL), 158–200 (RDGF…FQKA), 205–246 (GHED…ASFE), 280–328 (GHEN…GVWL), 338–377 (GNTL…PRQW), 385–424 (GHFD…DQKD), 438–476 (IHGY…VENF), 565–609 (GHGY…QVQS), 612–651 (FHTL…SSEF), 667–706 (VHSR…HNPM), 718–762 (DVGS…QEIN), and 775–831 (SHSL…RRAL).

The protein belongs to the WD repeat ELP2 family. Component of the elongator complex which consists of ELP1, ELP2, ELP3, ELP4, ELP5 and ELP6. Interacts with STAT3 and JAKs.

The protein localises to the cytoplasm. It localises to the nucleus. It functions in the pathway tRNA modification; 5-methoxycarbonylmethyl-2-thiouridine-tRNA biosynthesis. In terms of biological role, component of the elongator complex which is required for multiple tRNA modifications, including mcm5U (5-methoxycarbonylmethyl uridine), mcm5s2U (5-methoxycarbonylmethyl-2-thiouridine), and ncm5U (5-carbamoylmethyl uridine). The elongator comple catalyzes the formation of carboxymethyluridine in the wobble base at position 34 in tRNAs. In Mus musculus (Mouse), this protein is Elongator complex protein 2 (Elp2).